The following is a 617-amino-acid chain: Translation initiation factor IF-2 (617 aa).

Positions 1–11 (MSKHKPRHFQK) are enriched in basic residues. The interval 1–25 (MSKHKPRHFQKNKFDNRAKTSAKQQ) is disordered. Positions 119 to 288 (PRPPIVTIMG…ILLVAEVEDY (170 aa)) constitute a tr-type G domain. Residues 128–135 (GHVDHGKT) are G1. A GTP-binding site is contributed by 128–135 (GHVDHGKT). The segment at 153–157 (GITQK) is G2. Residues 175–178 (DTPG) form a G3 region. GTP is bound by residues 175 to 179 (DTPGH) and 229 to 232 (NKMD). The segment at 229–232 (NKMD) is G4. The tract at residues 265 to 267 (SAL) is G5.

The protein belongs to the TRAFAC class translation factor GTPase superfamily. Classic translation factor GTPase family. IF-2 subfamily.

The protein resides in the cytoplasm. In terms of biological role, one of the essential components for the initiation of protein synthesis. Protects formylmethionyl-tRNA from spontaneous hydrolysis and promotes its binding to the 30S ribosomal subunits. Also involved in the hydrolysis of GTP during the formation of the 70S ribosomal complex. This is Translation initiation factor IF-2 (infB) from Mycoplasma pneumoniae (strain ATCC 29342 / M129 / Subtype 1) (Mycoplasmoides pneumoniae).